Reading from the N-terminus, the 159-residue chain is Serine-protein kinase RsbW (159 aa).

The protein belongs to the anti-sigma-factor family.

It carries out the reaction L-seryl-[protein] + ATP = O-phospho-L-seryl-[protein] + ADP + H(+). The enzyme catalyses L-threonyl-[protein] + ATP = O-phospho-L-threonyl-[protein] + ADP + H(+). Functionally, negative regulator of sigma-B activity. Phosphorylates and inactivates its specific antagonist protein, RsbV. Upon phosphorylation of RsbV, RsbW is released and binds to sigma-B, thereby blocking its ability to form an RNA polymerase holoenzyme (E-sigma-B). This chain is Serine-protein kinase RsbW, found in Staphylococcus epidermidis.